The following is a 151-amino-acid chain: NADPH-dependent 7-cyano-7-deazaguanine reductase (151 aa).

The active-site Thioimide intermediate is C51. D58 (proton donor) is an active-site residue. Residues V73–S75 and H92–E93 each bind substrate.

Belongs to the GTP cyclohydrolase I family. QueF type 1 subfamily.

The protein localises to the cytoplasm. The enzyme catalyses 7-aminomethyl-7-carbaguanine + 2 NADP(+) = 7-cyano-7-deazaguanine + 2 NADPH + 3 H(+). The protein operates within tRNA modification; tRNA-queuosine biosynthesis. Catalyzes the NADPH-dependent reduction of 7-cyano-7-deazaguanine (preQ0) to 7-aminomethyl-7-deazaguanine (preQ1). This chain is NADPH-dependent 7-cyano-7-deazaguanine reductase, found in Bacteroides fragilis (strain ATCC 25285 / DSM 2151 / CCUG 4856 / JCM 11019 / LMG 10263 / NCTC 9343 / Onslow / VPI 2553 / EN-2).